An 81-amino-acid polypeptide reads, in one-letter code: ATP synthase subunit c, chloroplastic (81 aa).

2 helical membrane-spanning segments follow: residues 3–23 and 57–77; these read PLIA…ASIG and LAFM…LLFA.

The protein belongs to the ATPase C chain family. F-type ATPases have 2 components, F(1) - the catalytic core - and F(0) - the membrane proton channel. F(1) has five subunits: alpha(3), beta(3), gamma(1), delta(1), epsilon(1). F(0) has four main subunits: a(1), b(1), b'(1) and c(10-14). The alpha and beta chains form an alternating ring which encloses part of the gamma chain. F(1) is attached to F(0) by a central stalk formed by the gamma and epsilon chains, while a peripheral stalk is formed by the delta, b and b' chains.

Its subcellular location is the plastid. The protein resides in the chloroplast thylakoid membrane. F(1)F(0) ATP synthase produces ATP from ADP in the presence of a proton or sodium gradient. F-type ATPases consist of two structural domains, F(1) containing the extramembraneous catalytic core and F(0) containing the membrane proton channel, linked together by a central stalk and a peripheral stalk. During catalysis, ATP synthesis in the catalytic domain of F(1) is coupled via a rotary mechanism of the central stalk subunits to proton translocation. Its function is as follows. Key component of the F(0) channel; it plays a direct role in translocation across the membrane. A homomeric c-ring of between 10-14 subunits forms the central stalk rotor element with the F(1) delta and epsilon subunits. The polypeptide is ATP synthase subunit c, chloroplastic (Chaetosphaeridium globosum (Charophycean green alga)).